Reading from the N-terminus, the 180-residue chain is Cell wall / vacuolar inhibitor of fructosidase 2 (180 aa).

The first 23 residues, 1–23, serve as a signal peptide directing secretion; it reads MASSLIFLLLVTLTFSASTLISA. N-linked (GlcNAc...) asparagine glycosylation is present at Asn26. A disulfide bridge connects residues Cys35 and Cys44. N-linked (GlcNAc...) asparagine glycosylation is found at Asn73 and Asn84. A disulfide bond links Cys101 and Cys141.

Belongs to the PMEI family. As to expression, mostly expressed at low levels in seedlings, stems, leaves and flowers (in all organs), and, to a lower extent, in roots and siliques.

It localises to the vacuole. Its function is as follows. Inhibits fructosidases from both cell wall (cell wall invertase CWI) and vacuoles (vacuolar invertase VI). In Arabidopsis thaliana (Mouse-ear cress), this protein is Cell wall / vacuolar inhibitor of fructosidase 2 (C/VIF2).